Consider the following 400-residue polypeptide: Lysophospholipid transporter LplT (400 aa).

Helical transmembrane passes span 19-39, 53-73, 91-111, 139-159, 164-184, 195-213, 227-247, 257-277, 281-301, 304-324, 352-372, and 373-393; these read VIVAQFLSAFGDNALLFATLA, VLQMVFVGAYILFAPFVGQMA, AGAAGICLGVNPFVGYTLVGI, LMEASTIAAILLGSVAGGVLA, IAALVACALAYAGAVAANLFI, SWRLSAMTRSFFSACVVLW, LFWGAGVTLRFLLVLWVPVAL, YLNAMVAVGIVVGAGAAAKLV, TVSRCMPAGILIGVVVAIFSL, ALLPAYALLLLIGMLGGFFVV, NSAMLLMLGLYSLAVLVGVPA, and VAIGIGFGVLFALAIAALWIW.

This sequence belongs to the major facilitator superfamily. LplT (TC 2.A.1.42) family.

It localises to the cell inner membrane. Functionally, catalyzes the facilitated diffusion of 2-acyl-glycero-3-phosphoethanolamine (2-acyl-GPE) into the cell. This Salmonella enteritidis PT4 (strain P125109) protein is Lysophospholipid transporter LplT.